A 104-amino-acid polypeptide reads, in one-letter code: Flagellar hook-basal body complex protein FliE (104 aa).

This sequence belongs to the FliE family.

It localises to the bacterial flagellum basal body. This is Flagellar hook-basal body complex protein FliE from Serratia proteamaculans (strain 568).